The chain runs to 546 residues: Cytochrome P450 monooxygenase 219 (546 aa).

Residues methionine 1–arginine 22 form the signal peptide. 2 N-linked (GlcNAc...) asparagine glycosylation sites follow: asparagine 367 and asparagine 441. A heme-binding site is contributed by cysteine 487.

Belongs to the cytochrome P450 family. The cofactor is heme.

It participates in secondary metabolite biosynthesis. Cytochrome P450 monooxygenase that is able to use testosterone, anthracene, carbazole, pyrene, phenanthrene and trans-stilbene as substrates for oxidation. These multifunctional properties against a series of polycyclic aromatic hydrocarbons (PAHs) suggest that CYP219 would play important roles, at least in part, in fungal metabolic systems involved in xenobiotic detoxification. The chain is Cytochrome P450 monooxygenase 219 from Postia placenta (strain ATCC 44394 / Madison 698-R) (Brown rot fungus).